Here is a 316-residue protein sequence, read N- to C-terminus: Aspartate-semialdehyde dehydrogenase (316 aa).

NADP(+)-binding positions include 13-16 (TGAV) and 41-42 (RS). Arginine 101 serves as a coordination point for phosphate. The active-site Acyl-thioester intermediate is cysteine 132. Residue glutamine 159 participates in substrate binding. Position 162–163 (162–163 (SG)) interacts with NADP(+). Position 216 (lysine 216) interacts with phosphate. A substrate-binding site is contributed by arginine 238. Histidine 245 acts as the Proton acceptor in catalysis. NADP(+) is bound at residue asparagine 316.

This sequence belongs to the aspartate-semialdehyde dehydrogenase family. In terms of assembly, homodimer.

The catalysed reaction is L-aspartate 4-semialdehyde + phosphate + NADP(+) = 4-phospho-L-aspartate + NADPH + H(+). Its pathway is amino-acid biosynthesis; L-lysine biosynthesis via DAP pathway; (S)-tetrahydrodipicolinate from L-aspartate: step 2/4. The protein operates within amino-acid biosynthesis; L-methionine biosynthesis via de novo pathway; L-homoserine from L-aspartate: step 2/3. It functions in the pathway amino-acid biosynthesis; L-threonine biosynthesis; L-threonine from L-aspartate: step 2/5. Functionally, catalyzes the NADPH-dependent formation of L-aspartate-semialdehyde (L-ASA) by the reductive dephosphorylation of L-aspartyl-4-phosphate. This is Aspartate-semialdehyde dehydrogenase (asd) from Vibrio mimicus.